Consider the following 269-residue polypeptide: Signal recognition particle SEC65 subunit (269 aa).

2 disordered regions span residues 30 to 65 and 236 to 269; these read RTPI…DKSV and PMTK…KIRG. The segment covering 248–258 has biased composition (low complexity); the sequence is QPQVKAPQAPK. Over residues 259 to 269 the composition is skewed to basic residues; it reads QPKKKVMKIRG.

Belongs to the SRP19 family. As to quaternary structure, fungal signal recognition particle consists of a 7S RNA molecule (scR1) and at least six protein subunits: SRP72, SRP68, SRP54, SEC65, SRP21 andSRP14.

It is found in the cytoplasm. Its function is as follows. Signal-recognition-particle assembly has a crucial role in targeting secretory proteins to the rough endoplasmic reticulum membrane. It must be involved intimately in the translocation of a wide variety of protein substrates. The protein is Signal recognition particle SEC65 subunit (SEC65) of Debaryomyces hansenii (strain ATCC 36239 / CBS 767 / BCRC 21394 / JCM 1990 / NBRC 0083 / IGC 2968) (Yeast).